The chain runs to 180 residues: MNFGANLLTNYNEELTEKFYRLFPSIPLMLATLAALVISIFFLTYFFYKPIRKNIKKRKQYIQDNIDAANKLKQQSLENLEESNKKLNEAREQASEIINSSKRDAELIVINYKMSAQKKSEEILKKAQLEIKRKEEEFLRTSREEIIDAATIIAKKILIKEIDSNYEKKIIDDISFDSEK.

The chain crosses the membrane as a helical span at residues Ile-26–Phe-46.

It belongs to the ATPase B chain family. In terms of assembly, F-type ATPases have 2 components, F(1) - the catalytic core - and F(0) - the membrane proton channel. F(1) has five subunits: alpha(3), beta(3), gamma(1), delta(1), epsilon(1). F(0) has three main subunits: a(1), b(2) and c(10-14). The alpha and beta chains form an alternating ring which encloses part of the gamma chain. F(1) is attached to F(0) by a central stalk formed by the gamma and epsilon chains, while a peripheral stalk is formed by the delta and b chains.

The protein resides in the cell membrane. Functionally, f(1)F(0) ATP synthase produces ATP from ADP in the presence of a proton or sodium gradient. F-type ATPases consist of two structural domains, F(1) containing the extramembraneous catalytic core and F(0) containing the membrane proton channel, linked together by a central stalk and a peripheral stalk. During catalysis, ATP synthesis in the catalytic domain of F(1) is coupled via a rotary mechanism of the central stalk subunits to proton translocation. Component of the F(0) channel, it forms part of the peripheral stalk, linking F(1) to F(0). This chain is ATP synthase subunit b, found in Mycoplasmopsis pulmonis (strain UAB CTIP) (Mycoplasma pulmonis).